The primary structure comprises 397 residues: Argininosuccinate synthase (397 aa).

8-16 contributes to the ATP binding site; the sequence is AYSGGLDTS. Tyr-87 provides a ligand contact to L-citrulline. Gly-117 lines the ATP pocket. Residues Thr-119, Asn-123, and Asp-124 each contribute to the L-aspartate site. Position 123 (Asn-123) interacts with L-citrulline. Residues Arg-127, Ser-175, Glu-259, and Tyr-271 each contribute to the L-citrulline site.

The protein belongs to the argininosuccinate synthase family. Type 1 subfamily. As to quaternary structure, homotetramer.

The protein localises to the cytoplasm. The enzyme catalyses L-citrulline + L-aspartate + ATP = 2-(N(omega)-L-arginino)succinate + AMP + diphosphate + H(+). It functions in the pathway amino-acid biosynthesis; L-arginine biosynthesis; L-arginine from L-ornithine and carbamoyl phosphate: step 2/3. The polypeptide is Argininosuccinate synthase (Streptomyces griseus subsp. griseus (strain JCM 4626 / CBS 651.72 / NBRC 13350 / KCC S-0626 / ISP 5235)).